Here is a 278-residue protein sequence, read N- to C-terminus: Protein FixR (278 aa).

Position 40-64 (40-64 (LLTGASRGIGHATAKLFSEAGWRII)) interacts with NAD(+). Ser175 contacts substrate. The Proton acceptor role is filled by Tyr189.

The protein belongs to the short-chain dehydrogenases/reductases (SDR) family.

The sequence is that of Protein FixR (fixR) from Bradyrhizobium diazoefficiens (strain JCM 10833 / BCRC 13528 / IAM 13628 / NBRC 14792 / USDA 110).